Reading from the N-terminus, the 197-residue chain is Imidazoleglycerol-phosphate dehydratase (197 aa).

This sequence belongs to the imidazoleglycerol-phosphate dehydratase family.

The protein localises to the cytoplasm. The catalysed reaction is D-erythro-1-(imidazol-4-yl)glycerol 3-phosphate = 3-(imidazol-4-yl)-2-oxopropyl phosphate + H2O. Its pathway is amino-acid biosynthesis; L-histidine biosynthesis; L-histidine from 5-phospho-alpha-D-ribose 1-diphosphate: step 6/9. This Pseudomonas aeruginosa (strain LESB58) protein is Imidazoleglycerol-phosphate dehydratase.